The chain runs to 198 residues: Elongation factor Ts (198 aa).

An involved in Mg(2+) ion dislocation from EF-Tu region spans residues 82 to 85 (SDFV).

It belongs to the EF-Ts family.

The protein localises to the cytoplasm. Its function is as follows. Associates with the EF-Tu.GDP complex and induces the exchange of GDP to GTP. It remains bound to the aminoacyl-tRNA.EF-Tu.GTP complex up to the GTP hydrolysis stage on the ribosome. In Desulfosudis oleivorans (strain DSM 6200 / JCM 39069 / Hxd3) (Desulfococcus oleovorans), this protein is Elongation factor Ts.